The following is a 48-amino-acid chain: ATP synthase protein 8 (48 aa).

A helical transmembrane segment spans residues Val13 to Leu32.

This sequence belongs to the ATPase protein 8 family. F-type ATPases have 2 components, CF(1) - the catalytic core - and CF(0) - the membrane proton channel.

It localises to the mitochondrion membrane. Mitochondrial membrane ATP synthase (F(1)F(0) ATP synthase or Complex V) produces ATP from ADP in the presence of a proton gradient across the membrane which is generated by electron transport complexes of the respiratory chain. F-type ATPases consist of two structural domains, F(1) - containing the extramembraneous catalytic core and F(0) - containing the membrane proton channel, linked together by a central stalk and a peripheral stalk. During catalysis, ATP synthesis in the catalytic domain of F(1) is coupled via a rotary mechanism of the central stalk subunits to proton translocation. Part of the complex F(0) domain. Minor subunit located with subunit a in the membrane. This is ATP synthase protein 8 (ATP8) from Trichophyton rubrum (Athlete's foot fungus).